We begin with the raw amino-acid sequence, 336 residues long: MLTLGELAKKLDAELIGEASHVVDGLGTIQSAGPSQLTFLANPRYRSFLEQTNAGAVLIPESQREFCPVPALIVKDPYLSFAKASAFFEVAPQVQPGVHPAAVVDATAQIHTSASIGPNAVVEAGVIVGEGAVIMANSVVGAGCHIGDQCRIWPNVTIYHGVTLGPRTTIHANCVIGGDGFGFAFNGAGWTKLHQVGGVTIGADVEIGAGTTVDRGAIEDTIIGDGVILDNQIQVAHNVVIGDHTAIAGKAGIAGSAKIGSFCLIGGAAGIAGHIEVCDKVQILAMSLVSSSIKEPGTYGSALPVDSQSRYRRNVARFRNLDDLARRVRKLERLSD.

The active-site Proton acceptor is H237.

The protein belongs to the transferase hexapeptide repeat family. LpxD subfamily. Homotrimer.

The enzyme catalyses a UDP-3-O-[(3R)-3-hydroxyacyl]-alpha-D-glucosamine + a (3R)-hydroxyacyl-[ACP] = a UDP-2-N,3-O-bis[(3R)-3-hydroxyacyl]-alpha-D-glucosamine + holo-[ACP] + H(+). The protein operates within bacterial outer membrane biogenesis; LPS lipid A biosynthesis. In terms of biological role, catalyzes the N-acylation of UDP-3-O-acylglucosamine using 3-hydroxyacyl-ACP as the acyl donor. Is involved in the biosynthesis of lipid A, a phosphorylated glycolipid that anchors the lipopolysaccharide to the outer membrane of the cell. The chain is UDP-3-O-acylglucosamine N-acyltransferase from Alcanivorax borkumensis (strain ATCC 700651 / DSM 11573 / NCIMB 13689 / SK2).